A 68-amino-acid polypeptide reads, in one-letter code: Conotoxin Cal14.13a (68 aa).

Positions 1–21 (MKLCVVIVLLMLAMPFNGGEA) are cleaved as a signal peptide. Residues 22–38 (SRFFNQHARSQRSGMKT) constitute a propeptide that is removed on maturation. At Val66 the chain carries Valine amide.

Post-translationally, contains 2 disulfide bonds. In terms of tissue distribution, expressed by the venom duct.

It localises to the secreted. Functionally, probable neurotoxin with unknown target. Possibly targets ion channels. The polypeptide is Conotoxin Cal14.13a (Californiconus californicus (California cone)).